A 147-amino-acid polypeptide reads, in one-letter code: Ribosome maturation factor RimP (147 aa).

Belongs to the RimP family.

It is found in the cytoplasm. Required for maturation of 30S ribosomal subunits. In Sulfurihydrogenibium azorense (strain DSM 15241 / OCM 825 / Az-Fu1), this protein is Ribosome maturation factor RimP.